Consider the following 353-residue polypeptide: Fasciclin-like arabinogalactan protein 21 (353 aa).

An N-terminal signal peptide occupies residues 1–28; it reads MGCCSSDCFVYFILSIALAFMAISTTLR. 6 N-linked (GlcNAc...) asparagine glycosylation sites follow: asparagine 51, asparagine 81, asparagine 94, asparagine 200, asparagine 249, and asparagine 315. The 99-residue stretch at 83 to 181 folds into the FAS1 1 domain; the sequence is TLFAIEDASF…HGVIGPFSPL (99 aa). The FAS1 2 domain maps to 254-352; that stretch reads TILATPNLVS…GISHTLEIPH (99 aa).

It belongs to the fasciclin-like AGP family.

It is found in the secreted. May be a cell surface adhesion protein. This is Fasciclin-like arabinogalactan protein 21 (FLA21) from Arabidopsis thaliana (Mouse-ear cress).